A 408-amino-acid polypeptide reads, in one-letter code: Serine/threonine-protein kinase UCNL (408 aa).

The 321-residue stretch at 21-341 (IKALKILGKG…AAEIKELAFF (321 aa)) folds into the Protein kinase domain. ATP is bound by residues 27–35 (LGKGATGTV) and Lys54. The active-site Proton acceptor is Asp152. The AGC-kinase C-terminal domain maps to 342 to 408 (AGVRWDLLTE…CRKNDPFIEF (67 aa)).

It belongs to the protein kinase superfamily. AGC Ser/Thr protein kinase family. As to expression, expressed in the epidermis and cortex of the transition zone of the root apex. Expressed in rosette leaves, stems, flowers and siliques.

It is found in the cytoplasm. The protein localises to the nucleus. The catalysed reaction is L-seryl-[protein] + ATP = O-phospho-L-seryl-[protein] + ADP + H(+). It carries out the reaction L-threonyl-[protein] + ATP = O-phospho-L-threonyl-[protein] + ADP + H(+). In terms of biological role, regulates planar ovule integument development. The polypeptide is Serine/threonine-protein kinase UCNL (Arabidopsis thaliana (Mouse-ear cress)).